The primary structure comprises 170 residues: Class I hydrophobin E (170 aa).

The first 19 residues, 1–19 (MQLTTLLTGLISVLSVTTA), serve as a signal peptide directing secretion. Disulfide bonds link Cys62–Cys126, Cys70–Cys117, Cys71–Cys105, and Cys127–Cys139.

The protein belongs to the fungal hydrophobin family.

Its subcellular location is the secreted. The protein localises to the cell wall. Aerial growth, conidiation, and dispersal of filamentous fungi in the environment rely upon a capability of their secreting small amphipathic proteins called hydrophobins (HPBs) with low sequence identity. Class I can self-assemble into an outermost layer of rodlet bundles on aerial cell surfaces, conferring cellular hydrophobicity that supports fungal growth, development and dispersal; whereas Class II form highly ordered films at water-air interfaces through intermolecular interactions but contribute nothing to the rodlet structure. In P.expansum, hydrophobins contribute to germination, tolerance to cold stress and mycotoxins patulin and citrinin production. The chain is Class I hydrophobin E from Penicillium expansum (Blue mold rot fungus).